A 303-amino-acid polypeptide reads, in one-letter code: Taste receptor type 2 member 13 (303 aa).

Residues Met-1–Ser-7 are Extracellular-facing. Residues Ile-8–Val-28 form a helical membrane-spanning segment. The Cytoplasmic segment spans residues Leu-29–Arg-55. Residues Ile-56 to Phe-76 traverse the membrane as a helical segment. Topologically, residues Val-77 to Met-85 are extracellular. Residues Ile-86–Phe-106 traverse the membrane as a helical segment. At Tyr-107–Lys-128 the chain is on the cytoplasmic side. Residues Val-129–Asn-149 form a helical membrane-spanning segment. Over Met-150 to Thr-184 the chain is Extracellular. Asn-162 and Asn-166 each carry an N-linked (GlcNAc...) asparagine glycan. The chain crosses the membrane as a helical span at residues Met-185–Leu-205. The Cytoplasmic segment spans residues Gln-206–Lys-232. The chain crosses the membrane as a helical span at residues Ile-233–Ile-253. Residues Ser-254–Val-261 are Extracellular-facing. Residues Ile-262–Ile-282 form a helical membrane-spanning segment. The Cytoplasmic segment spans residues Leu-283–Arg-303.

The protein belongs to the G-protein coupled receptor T2R family. Expressed in subsets of taste receptor cells of the tongue and palate epithelium and exclusively in gustducin-positive cells.

The protein localises to the membrane. Receptor that may play a role in the perception of bitterness and is gustducin-linked. May play a role in sensing the chemical composition of the gastrointestinal content. The activity of this receptor may stimulate alpha gustducin, mediate PLC-beta-2 activation and lead to the gating of TRPM5. The protein is Taste receptor type 2 member 13 (TAS2R13) of Homo sapiens (Human).